Reading from the N-terminus, the 406-residue chain is MHPAVFLSLPDLRCSLLLLVTWVFTPVTTEITSLDTENIDEILNNADVALVNFYADWCRFSQMLHPIFEEASDVIKEEFPNENQVVFARVDCDQHSDIAQRYRISKYPTLKLFRNGMMMKREYRGQRSVKALADYIRQQKSDPIQEIRDLAEITTLDRSKRNIIGYFEQKDSDNYRVFERVANILHDDCAFLSAFGDVSKPERYSGDNIIYKPPGHSAPDMVYLGAMTNFDVTYNWIQDKCVPLVREITFENGEELTEEGLPFLILFHMKEDTESLEIFQNEVARQLISEKGTINFLHADCDKFRHPLLHIQKTPADCPVIAIDSFRHMYVFGDFKDVLIPGKLKQFVFDLHSGKLHREFHHGPDPTDTAPGEQAQDVASSPPESSFQKLAPSEYRYTLLRDRDEL.

A signal peptide spans 1–29 (MHPAVFLSLPDLRCSLLLLVTWVFTPVTT). Residues 30-138 (EITSLDTENI…VKALADYIRQ (109 aa)) enclose the Thioredoxin domain. Intrachain disulfides connect Cys-189–Cys-241 and Cys-301–Cys-318. The interaction with ITPR1 stretch occupies residues 236-285 (WIQDKCVPLVREITFENGEELTEEGLPFLILFHMKEDTESLEIFQNEVAR). The disordered stretch occupies residues 360–387 (FHHGPDPTDTAPGEQAQDVASSPPESSF). A compositionally biased stretch (polar residues) spans 377–387 (DVASSPPESSF). Residues 403 to 406 (RDEL) carry the Prevents secretion from ER motif.

In terms of assembly, forms mixed disulfides with both ERO1A and ERO1B and cargo folding intermediates; the interactions with ERO1A and ERO1B result in their retention in the endoplasmic reticulum. Directly interacts with ITPR1 in a pH-, redox state- and calcium-dependent manner, but not with ITPR2 or ITPR3. The strength of this interaction inversely correlates with calcium concentration.

It localises to the endoplasmic reticulum lumen. In terms of biological role, mediates thiol-dependent retention in the early secretory pathway, forming mixed disulfides with substrate proteins through its conserved CRFS motif. Inhibits the calcium channel activity of ITPR1. May have a role in the control of oxidative protein folding in the endoplasmic reticulum. Required to retain ERO1A and ERO1B in the endoplasmic reticulum. This Homo sapiens (Human) protein is Endoplasmic reticulum resident protein 44 (ERP44).